The chain runs to 280 residues: MAIHLYKTSTPSTRNGAVDSQVKSNPRNNLIYGQHRCGKGRNARGIITAGHRGGGHKRLYRKIDFRRNKKNIEGRIVTIEYDPNRNAYICLIHYGDGEKRYILHPRGAIIGDSIVSGTEVSIKMGNALRLGNALPLTDMPLGTAIHNIEITLGKGGQLARAAGAVAKLIAKEGKSATLKLPSGEVRLISKNCSATFGQVGNVGVNQKSLGRAGSKCWLGKRPVVRGVVMNPVDHPHGGGEGRAPIGRKNPTTPWGYPALGRRSRKRNKYSDSLILRRRTK.

Disordered stretches follow at residues 1–25 (MAIH…VKSN) and 231–280 (PVDH…RRTK).

Belongs to the universal ribosomal protein uL2 family. In terms of assembly, part of the 50S ribosomal subunit.

It is found in the plastid. The protein resides in the chloroplast. The sequence is that of Large ribosomal subunit protein uL2cz/uL2cy (rpl2-A) from Platanus occidentalis (Sycamore).